A 488-amino-acid chain; its full sequence is RNA binding exosome specificity factor Mmi1 (488 aa).

Composition is skewed to polar residues over residues 1–14, 33–47, and 54–66; these read MSNT…SSKS, LNES…TTHT, and SVLS…NFSS. Disordered stretches follow at residues 1 to 20 and 25 to 80; these read MSNT…ELPN and RSLW…DAPI. The segment covering 71-80 has biased composition (basic and acidic residues); sequence PAPESHDAPI. The tract at residues 95–122 is interaction with erh1; that stretch reads GKYDFSRHCTDYGHSYEWPYFRSLRRES. 2 disordered regions span residues 163-185 and 225-261; these read SRLH…RRLA and SYPV…TRAS. A Phosphothreonine modification is found at Thr-176. Phosphoserine is present on residues Ser-178, Ser-230, Ser-231, Ser-261, Ser-263, and Ser-265. The segment covering 289–299 has biased composition (low complexity); sequence SYLLSNSSNDS. The tract at residues 289–328 is disordered; the sequence is SYLLSNSSNDSASRKEKPKARASTPPPLNFSRASEHRNEK. Phosphoserine is present on Ser-311. Residue Thr-312 is modified to Phosphothreonine. A YTH domain is found at 350–476; sequence SRYFIMLCDN…DEGSRLCTLI (127 aa).

Component of the erh1-mmi1 complex composed of mmi1 and erh1. Interacts (via N-terminus) with erh1 in a 2:2 stoichiometry. Interacts with rrp6.

It localises to the nucleus. Functionally, RNA-binding protein that recognizes and binds N6-methyladenosine (m6A)-containing RNAs, a modification present at internal sites of mRNAs and some non-coding RNAs. Functions alone and as part of the erh1-mmi1 complex, to recruit the CCR4-NOT complex and the NURS complex to target RNAs. Suppresses the meiotic program during vegetative growth and promotes the meiotic program during mating. Binds to DSR (determinant of selective removal) regions in meiotic mRNA, and recruits the NURS complex to targets. Recruitment of NURS complex to target mRNAs promotes mRNA decay by engagement of the nuclear exosome, and formation of heterochromatin islands at meiotic genes silenced by the exosome. Recruitment of the CCR4-NOT complex to target RNAs promotes heterochromatin formation at RNAi-dependent heterochromatin domains (HOODs), including a subset of meiotic genes, lncRNAs and retrotransposons. Recruitment of the CCR4-NOT complex to rDNA promotes rDNA heterochromatin assembly. Promotes non-canonical transcription termination at meiotic genes and prevents lncRNA transcription from invading and repressing adjacent genes. The chain is RNA binding exosome specificity factor Mmi1 (mmi1) from Schizosaccharomyces pombe (strain 972 / ATCC 24843) (Fission yeast).